We begin with the raw amino-acid sequence, 856 residues long: V-type proton ATPase 116 kDa subunit a 2 (856 aa).

At 1 to 393 the chain is on the cytoplasmic side; that stretch reads MGSLFRSESM…DAYGVGSYRE (393 aa). Residues 394–412 form a helical membrane-spanning segment; the sequence is VNPALFTIITFPFLFAVMF. Topologically, residues 413 to 414 are vacuolar; it reads GD. Residues 415–431 traverse the membrane as a helical segment; that stretch reads FGHGFVMFLFALLLVLN. Residues 432–445 lie on the Cytoplasmic side of the membrane; sequence ENHPRLSQSQEILR. A helical transmembrane segment spans residues 446-475; it reads MFFDGRYILLLMGLFSVYTGLIYNDCFSKS. At 476-549 the chain is on the vacuolar side; the sequence is VNLFGSGWNV…ATNRLTFLNS (74 aa). A helical transmembrane segment spans residues 550–569; sequence FKMKMSVILGIFHMTFGVVL. The Cytoplasmic segment spans residues 570–587; sequence GIFNHLHFRKKFNVYLVS. The helical transmembrane segment at 588–608 threads the bilayer; sequence VPEILFMLCIFGYLIFMIIYK. At 609-651 the chain is on the vacuolar side; the sequence is WLAYSAETSREAPSILIEFINMFLFPTSKTHGLYPGQAHVQRV. The chain crosses the membrane as a helical span at residues 652 to 671; the sequence is LVALTVLAVPVLFLGKPLFL. Residues 672–739 lie on the Cytoplasmic side of the membrane; that stretch reads LWLHNGRNCF…EILMTQAIHS (68 aa). Phosphoserine is present on residues serine 695 and serine 700. The chain crosses the membrane as a helical span at residues 740–764; it reads IEYCLGCISNTASYLRLWALSLAHA. Over 765–785 the chain is Vacuolar; it reads QLSDVLWAMLMRVGLRVDTTY. Residues 786–824 form a helical membrane-spanning segment; it reads GVLLLLPVMAFFAVLTIFILLVMEGLSAFLHAIRLHWVE. The Cytoplasmic portion of the chain corresponds to 825 to 856; that stretch reads FQNKFYVGAGTKFVPFSFSLLSSKFSNDDSIA.

It belongs to the V-ATPase 116 kDa subunit family. V-ATPase is a heteromultimeric enzyme made up of two complexes: the ATP-hydrolytic V1 complex and the proton translocation V0 complex. The V1 complex consists of three catalytic AB heterodimers that form a heterohexamer, three peripheral stalks each consisting of EG heterodimers, one central rotor including subunits D and F, and the regulatory subunits C and H. The proton translocation complex V0 consists of the proton transport subunit a, a ring of proteolipid subunits c9c'', rotary subunit d, subunits e and f, and the accessory subunits ATP6AP1/Ac45 and ATP6AP2/PRR. Directly interacts with PSCD2 through its N-terminal cytosolic tail in an intra-endosomal acidification-dependent manner. Disruption of this interaction results in the inhibition of endocytosis. Interacts with SPAAR. In terms of tissue distribution, relatively high expression in kidney and liver. Lower levels in the spleen, testis, and skeletal muscle. Also expressed in the thymus.

It localises to the cell membrane. The protein resides in the endosome membrane. Functionally, subunit of the V0 complex of vacuolar(H+)-ATPase (V-ATPase), a multisubunit enzyme composed of a peripheral complex (V1) that hydrolyzes ATP and a membrane integral complex (V0) that translocates protons. V-ATPase is responsible for acidifying and maintaining the pH of intracellular compartments and in some cell types, is targeted to the plasma membrane, where it is responsible for acidifying the extracellular environment. Essential component of the endosomal pH-sensing machinery. May play a role in maintaining the Golgi functions, such as glycosylation maturation, by controlling the Golgi pH. In aerobic conditions, involved in intracellular iron homeostasis, thus triggering the activity of Fe(2+) prolyl hydroxylase (PHD) enzymes, and leading to HIF1A hydroxylation and subsequent proteasomal degradation. The protein is V-type proton ATPase 116 kDa subunit a 2 (Atp6v0a2) of Mus musculus (Mouse).